Here is a 204-residue protein sequence, read N- to C-terminus: Gellan lyase (204 aa).

As to quaternary structure, multimer.

It localises to the secreted. The catalysed reaction is Eliminative cleavage of beta-D-glucopyranosyl-(1-&gt;4)-beta-D-glucopyranosyluronate bonds of gellan backbone releasing tetrasaccharides containing a 4-deoxy-4,5-unsaturated D-glucopyranosyluronic acid at the non-reducing end. The tetrasaccharide produced from deacetylated gellan is beta-D-4-deoxy-Delta(4)-GlcAp-(1-&gt;4)-beta-D-Glcp-(1-&gt;4)-alpha-L-Rhap-(1-&gt;3)-beta-D-Glcp.. Its activity is regulated as follows. Activity is stimulated by zinc, potassium, lithium, cobalt, sodium, calcium, iron, manganase, magnesium and mercury ions at a concentration of 1 mM, but inhibited by copper ions at a concentration of 1 mM. Activity is inhibited by potassium, sodium and magnesium ions at a concentration of 1 M. Activity is inhibited by urea, EDTA, dithiothreitol, p-CMB, PSF, natrium lauryl sulfate and N-bromosuccinimide. In terms of biological role, cleaves the glycosidic bonds of gellan backbone and releases tetrasaccharide units of glucuronyl-glucosyl-rhamnosyl-glucose with unsaturated glucuronic acid at the non-reducing terminal. The enzyme is highly specific to the heteropolysaccharide gellan. This Geobacillus stearothermophilus (Bacillus stearothermophilus) protein is Gellan lyase.